Here is a 122-residue protein sequence, read N- to C-terminus: Ribonuclease P protein component (122 aa).

It belongs to the RnpA family. As to quaternary structure, consists of a catalytic RNA component (M1 or rnpB) and a protein subunit.

The enzyme catalyses Endonucleolytic cleavage of RNA, removing 5'-extranucleotides from tRNA precursor.. In terms of biological role, RNaseP catalyzes the removal of the 5'-leader sequence from pre-tRNA to produce the mature 5'-terminus. It can also cleave other RNA substrates such as 4.5S RNA. The protein component plays an auxiliary but essential role in vivo by binding to the 5'-leader sequence and broadening the substrate specificity of the ribozyme. This is Ribonuclease P protein component from Oenococcus oeni (strain ATCC BAA-331 / PSU-1).